Consider the following 552-residue polypeptide: Chaperonin GroEL (552 aa).

ATP contacts are provided by residues 30–33, Lys-51, 87–91, Gly-415, 480–482, and Asp-496; these read TLGP, DGTTT, and NAA.

It belongs to the chaperonin (HSP60) family. Forms a cylinder of 14 subunits composed of two heptameric rings stacked back-to-back. Interacts with the co-chaperonin GroES.

It is found in the cytoplasm. The catalysed reaction is ATP + H2O + a folded polypeptide = ADP + phosphate + an unfolded polypeptide.. In terms of biological role, together with its co-chaperonin GroES, plays an essential role in assisting protein folding. The GroEL-GroES system forms a nano-cage that allows encapsulation of the non-native substrate proteins and provides a physical environment optimized to promote and accelerate protein folding. The protein is Chaperonin GroEL of Coxiella burnetii (strain RSA 493 / Nine Mile phase I).